A 201-amino-acid polypeptide reads, in one-letter code: Ribosome maturation factor RimM (201 aa).

The region spanning E94–L168 is the PRC barrel domain. Residues P164–S201 form a disordered region. A compositionally biased stretch (acidic residues) spans G180–G194.

The protein belongs to the RimM family. As to quaternary structure, binds ribosomal protein uS19.

It is found in the cytoplasm. In terms of biological role, an accessory protein needed during the final step in the assembly of 30S ribosomal subunit, possibly for assembly of the head region. Essential for efficient processing of 16S rRNA. May be needed both before and after RbfA during the maturation of 16S rRNA. It has affinity for free ribosomal 30S subunits but not for 70S ribosomes. The polypeptide is Ribosome maturation factor RimM (Rhodospirillum rubrum (strain ATCC 11170 / ATH 1.1.1 / DSM 467 / LMG 4362 / NCIMB 8255 / S1)).